Consider the following 451-residue polypeptide: Signal transduction histidine-protein kinase ArlS (451 aa).

Transmembrane regions (helical) follow at residues 11-31 and 156-176; these read IIVT…IIIF and IIAL…SYVF. The HAMP domain maps to 178–231; the sequence is TQITKPLVSLSNKMIEIRRDGFQNKLQLNTNYEEIDNLANTFNEMMSQIEESFN. The Histidine kinase domain maps to 239–451; it reads DASHELRTPL…NKGTTFKIIF (213 aa). At histidine 242 the chain carries Phosphohistidine; by autocatalysis.

Post-translationally, autophosphorylated.

It is found in the cell membrane. It carries out the reaction ATP + protein L-histidine = ADP + protein N-phospho-L-histidine.. Its function is as follows. Member of the two-component regulatory system ArlS/ArlR involved in the regulation of adhesion, autolysis, multidrug resistance and virulence. ArlS probably functions as a sensor protein kinase which is autophosphorylated at a histidine residue and transfers its phosphate group to ArlR. This Staphylococcus aureus (strain USA300) protein is Signal transduction histidine-protein kinase ArlS (arlS).